The following is a 456-amino-acid chain: Bacteriochlorophyllide d C-12(1)-methyltransferase (456 aa).

Positions 178–405 (HAKKYSQLIP…MFEPKKLGGE (228 aa)) constitute a Radical SAM core domain. [4Fe-4S] cluster is bound by residues cysteine 194, cysteine 198, and cysteine 201.

Belongs to the radical SAM superfamily. [4Fe-4S] cluster is required as a cofactor.

It localises to the cytoplasm. It carries out the reaction 8-ethyl-12-methyl-3-vinylbacteriochlorophyllide d + S-adenosyl-L-methionine = 8,12-diethyl-3-vinylbacteriochlorophyllide d + S-adenosyl-L-homocysteine + H(+). Its pathway is porphyrin-containing compound metabolism; bacteriochlorophyll biosynthesis (light-independent). In terms of biological role, involved in the biosynthesis of the major light-harvesting pigment bacteriochlorophyll c (BChlc), which confers a significant competitive advantage to green sulfur bacteria living at limiting red and near-infrared light intensities. BchR is a methyltransferase that adds a single methyl group to the methyl carbon at the C-12(1) position of 8-ethyl-12-methyl-3-vinylbacteriochlorophyllide d to yield 8,12-diethyl-3-vinylbacteriochlorophyllide d. This Chlorobaculum tepidum (strain ATCC 49652 / DSM 12025 / NBRC 103806 / TLS) (Chlorobium tepidum) protein is Bacteriochlorophyllide d C-12(1)-methyltransferase.